The primary structure comprises 747 residues: Fatty acid oxidation complex subunit alpha (747 aa).

An enoyl-CoA hydratase region spans residues 1–197 (MGASATNSVT…KMGLVDDVVP (197 aa)). Residues 313-747 (RAIHRVGVLG…NIDEVTDVAS (435 aa)) are 3-hydroxyacyl-CoA dehydrogenase. The interval 590–614 (YLYSNPTKNSSPTKNGNSPAKRNSF) is disordered. Residues 593–610 (SNPTKNSSPTKNGNSPAK) are compositionally biased toward polar residues.

The protein in the N-terminal section; belongs to the enoyl-CoA hydratase/isomerase family. It in the central section; belongs to the 3-hydroxyacyl-CoA dehydrogenase family. In terms of assembly, heterotetramer of two alpha chains (FadJ) and two beta chains (FadI).

It localises to the cytoplasm. It catalyses the reaction a (3S)-3-hydroxyacyl-CoA = a (2E)-enoyl-CoA + H2O. The catalysed reaction is a 4-saturated-(3S)-3-hydroxyacyl-CoA = a (3E)-enoyl-CoA + H2O. The enzyme catalyses a (3S)-3-hydroxyacyl-CoA + NAD(+) = a 3-oxoacyl-CoA + NADH + H(+). It carries out the reaction (3S)-3-hydroxybutanoyl-CoA = (3R)-3-hydroxybutanoyl-CoA. The protein operates within lipid metabolism; fatty acid beta-oxidation. In terms of biological role, catalyzes the formation of a hydroxyacyl-CoA by addition of water on enoyl-CoA. Also exhibits 3-hydroxyacyl-CoA epimerase and 3-hydroxyacyl-CoA dehydrogenase activities. The protein is Fatty acid oxidation complex subunit alpha of Yersinia pseudotuberculosis serotype O:1b (strain IP 31758).